Consider the following 212-residue polypeptide: Adenylate kinase (212 aa).

An ATP-binding site is contributed by 10 to 15; that stretch reads GAGKGT. The segment at 30–59 is NMP; sequence STGDMFRAAMANQTEMGRLAKSYIDKGELV. AMP contacts are provided by residues Thr-31, Arg-36, 57–59, 86–89, and Gln-93; these read ELV and GYPR. The segment at 127–159 is LID; it reads GRIINRKTGETFHKVFNPPVDYKEEDYYQREDD. ATP-binding positions include Arg-128 and 137–138; that span reads TF. Arg-156 and Arg-167 together coordinate AMP. An ATP-binding site is contributed by Gln-195.

Belongs to the adenylate kinase family. Monomer.

It localises to the cytoplasm. The enzyme catalyses AMP + ATP = 2 ADP. It participates in purine metabolism; AMP biosynthesis via salvage pathway; AMP from ADP: step 1/1. Catalyzes the reversible transfer of the terminal phosphate group between ATP and AMP. Plays an important role in cellular energy homeostasis and in adenine nucleotide metabolism. The polypeptide is Adenylate kinase (Streptococcus pyogenes serotype M3 (strain ATCC BAA-595 / MGAS315)).